A 142-amino-acid polypeptide reads, in one-letter code: HTH-type transcriptional regulator MntR (142 aa).

An HTH dtxR-type domain is found at 1-63; sequence MPTPSMEDYI…YEKYRGLVLT (63 aa). 6 residues coordinate Mn(2+): D8, E11, H77, E99, E102, and H103.

The protein belongs to the DtxR/MntR family. Homodimer.

The protein localises to the cytoplasm. Its activity is regulated as follows. DNA binding is strongly activated by Mn(2+). Central regulator of manganese homeostasis. This is HTH-type transcriptional regulator MntR from Bacillus cereus (strain ATCC 14579 / DSM 31 / CCUG 7414 / JCM 2152 / NBRC 15305 / NCIMB 9373 / NCTC 2599 / NRRL B-3711).